The chain runs to 305 residues: MGIQTSPVLLASLGVGLVTLLGLAVGSYLVRRSRRPQVTLLDPNEKYLLRLLDKTTVSHNTKRFRFALPTAHHTLGLPVGKHIYLSTRIDGSLVIRPYTPVTSDEDQGYVDLVIKVYLKGVHPKFPEGGKMSQYLDSLKVGDVVEFRGPSGLLTYTGKGHFNIQPNKKSPPEPRVAKKLGMIAGGTGITPMLQLIRAILKVPEDPTQCFLLFANQTEKDIILREDLEELQARYPNRFKLWFTLDHPPKDWAYSKGFVTADMIREHLPAPGDDVLVLLCGPPPMVQLACHPNLDKLGYSQKMRFTY.

A helical transmembrane segment spans residues 8-28 (VLLASLGVGLVTLLGLAVGSY). In terms of domain architecture, FAD-binding FR-type spans 44–156 (NEKYLLRLLD…RGPSGLLTYT (113 aa)). FAD-binding positions include 136–166 (DSLKVGDVVEFRGPSGLLTYTGKGHFNIQPN) and 175–210 (VAKKLGMIAGGTGITPMLQLIRAILKVPEDPTQCFL).

It belongs to the flavoprotein pyridine nucleotide cytochrome reductase family. It depends on FAD as a cofactor. As to expression, widely expressed.

Its subcellular location is the membrane. It catalyses the reaction 2 Fe(III)-[cytochrome b5] + NADH = 2 Fe(II)-[cytochrome b5] + NAD(+) + H(+). Functionally, NADH-cytochrome b5 reductases are involved in desaturation and elongation of fatty acids, cholesterol biosynthesis, drug metabolism, and, in erythrocyte, methemoglobin reduction. The sequence is that of NADH-cytochrome b5 reductase 1 (CYB5R1) from Homo sapiens (Human).